Consider the following 210-residue polypeptide: 3-oxo-tetronate 4-phosphate decarboxylase (210 aa).

Glu74 (proton acceptor) is an active-site residue. Zn(2+) is bound by residues Glu74, His93, and His95. Tyr120 functions as the Proton donor in the catalytic mechanism. His160 serves as a coordination point for Zn(2+).

This sequence belongs to the aldolase class II family. AraD/FucA subfamily. The cofactor is Zn(2+).

It carries out the reaction 3-dehydro-4-O-phospho-D-erythronate + H(+) = dihydroxyacetone phosphate + CO2. The enzyme catalyses 3-dehydro-4-O-phospho-L-erythronate + H(+) = dihydroxyacetone phosphate + CO2. Catalyzes the decarboxylation of 3-oxo-tetronate 4-phosphate to dihydroxyacetone phosphate (DHAP) and CO(2). This Haemophilus influenzae (strain ATCC 51907 / DSM 11121 / KW20 / Rd) protein is 3-oxo-tetronate 4-phosphate decarboxylase.